The chain runs to 567 residues: R-linalool synthase QH1, chloroplastic (567 aa).

The N-terminal 24 residues, 1–24, are a transit peptide targeting the chloroplast; the sequence is GNAYMRIYSTKTTRITANATVNAA. Residues Arg-282, Asp-319, Asp-323, Arg-460, and Asp-463 each contribute to the (2E)-geranyl diphosphate site. The Mg(2+) site is built by Asp-319 and Asp-323. The DDXXD motif signature appears at 319 to 323; sequence DDVYD. 3 residues coordinate Mg(2+): Asp-463, Thr-467, and Glu-471.

Belongs to the terpene synthase family. Tpsb subfamily. Mg(2+) serves as cofactor. Highly expressed in leaves and lower levels in inflorescences. Not detected in stems, stem epidermis, stem stele or roots.

It localises to the plastid. It is found in the chloroplast. It catalyses the reaction (2E)-geranyl diphosphate + H2O = (R)-linalool + diphosphate. The protein operates within secondary metabolite biosynthesis; terpenoid biosynthesis. Functionally, monoterpene synthase that catalyzes the formation of (3R)-linalool from geranyl diphosphate, but not from isopentenyl diphosphate, dimethylallyl diphosphate, chrysanthemyl diphosphate, farnesyl diphosphate, (+)-copalyl diphosphate or geranylgeranyl diphosphate. The chain is R-linalool synthase QH1, chloroplastic (QH1) from Artemisia annua (Sweet wormwood).